The chain runs to 225 residues: Imidazole glycerol phosphate synthase subunit HisH (225 aa).

The Glutamine amidotransferase type-1 domain maps to 3–225 (TIAIVDYGMG…LYRNFVDWQP (223 aa)). Residue cysteine 82 is the Nucleophile of the active site. Residues histidine 205 and glutamate 207 contribute to the active site.

Heterodimer of HisH and HisF.

Its subcellular location is the cytoplasm. It carries out the reaction 5-[(5-phospho-1-deoxy-D-ribulos-1-ylimino)methylamino]-1-(5-phospho-beta-D-ribosyl)imidazole-4-carboxamide + L-glutamine = D-erythro-1-(imidazol-4-yl)glycerol 3-phosphate + 5-amino-1-(5-phospho-beta-D-ribosyl)imidazole-4-carboxamide + L-glutamate + H(+). The catalysed reaction is L-glutamine + H2O = L-glutamate + NH4(+). Its pathway is amino-acid biosynthesis; L-histidine biosynthesis; L-histidine from 5-phospho-alpha-D-ribose 1-diphosphate: step 5/9. IGPS catalyzes the conversion of PRFAR and glutamine to IGP, AICAR and glutamate. The HisH subunit catalyzes the hydrolysis of glutamine to glutamate and ammonia as part of the synthesis of IGP and AICAR. The resulting ammonia molecule is channeled to the active site of HisF. This chain is Imidazole glycerol phosphate synthase subunit HisH, found in Bordetella bronchiseptica (strain ATCC BAA-588 / NCTC 13252 / RB50) (Alcaligenes bronchisepticus).